Reading from the N-terminus, the 1493-residue chain is Mediator of RNA polymerase II transcription subunit 14 (1493 aa).

Disordered stretches follow at residues M1–A51, M71–G110, T408–V427, Q674–S693, E894–D913, and G957–D997. Positions P90–G100 are enriched in basic and acidic residues.

Belongs to the Mediator complex subunit 14 family. As to quaternary structure, component of the Mediator complex.

Its subcellular location is the nucleus. In terms of biological role, component of the Mediator complex, a coactivator involved in the regulated transcription of nearly all RNA polymerase II-dependent genes. Mediator functions as a bridge to convey information from gene-specific regulatory proteins to the basal RNA polymerase II transcription machinery. Mediator is recruited to promoters by direct interactions with regulatory proteins and serves as a scaffold for the assembly of a functional preinitiation complex with RNA polymerase II and the general transcription factors. The sequence is that of Mediator of RNA polymerase II transcription subunit 14 (RGR1) from Mycosarcoma maydis (Corn smut fungus).